We begin with the raw amino-acid sequence, 307 residues long: Ribonuclease Z (307 aa).

The Zn(2+) site is built by H63, H65, D67, H68, H141, D212, and H270. The active-site Proton acceptor is the D67.

This sequence belongs to the RNase Z family. Homodimer. Requires Zn(2+) as cofactor.

It carries out the reaction Endonucleolytic cleavage of RNA, removing extra 3' nucleotides from tRNA precursor, generating 3' termini of tRNAs. A 3'-hydroxy group is left at the tRNA terminus and a 5'-phosphoryl group is left at the trailer molecule.. Zinc phosphodiesterase, which displays some tRNA 3'-processing endonuclease activity. Probably involved in tRNA maturation, by removing a 3'-trailer from precursor tRNA. The polypeptide is Ribonuclease Z (Bacillus anthracis (strain A0248)).